The primary structure comprises 287 residues: tRNA pseudouridine synthase B (287 aa).

Residue Asp37 is the Nucleophile of the active site.

Belongs to the pseudouridine synthase TruB family. Type 1 subfamily.

The catalysed reaction is uridine(55) in tRNA = pseudouridine(55) in tRNA. Its function is as follows. Responsible for synthesis of pseudouridine from uracil-55 in the psi GC loop of transfer RNAs. The chain is tRNA pseudouridine synthase B from Caldicellulosiruptor saccharolyticus (strain ATCC 43494 / DSM 8903 / Tp8T 6331).